The chain runs to 56 residues: U-limacoditoxin(3)-Dv21 (56 aa).

The N-terminal stretch at 1 to 19 is a signal peptide; sequence MKKVIMLLLIFALFAYALS. 3 disulfides stabilise this stretch: cysteine 26-cysteine 41, cysteine 33-cysteine 46, and cysteine 40-cysteine 53.

The protein belongs to the limacoditoxin-22 family. In terms of tissue distribution, expressed by the venom secretory cell of the spine. The spine is a cuticular structure containing a single large nucleated venom-secreting cell at its base. It is an independent unit capable of producing, storing and injecting venom. On the back of D.vulnerans caterpillars, spines are grouped together by 50 to 100 to form scoli, of which there are eight in D.vulnerans.

The protein resides in the secreted. Probable toxin. Shows a moderate antiparasitic activity against the major pathogenic nematode of ruminants (H.contortus, IC(50)=22.1 uM). Does not show insecticidal activities. Does not induce increase in intracellular calcium in mouse DRG neurons, suggesting that it does not induce pain. The protein is U-limacoditoxin(3)-Dv21 of Doratifera vulnerans (Mottled cup moth).